The chain runs to 577 residues: METEFGLTEYASEHTITPVPCLLKEMYSDFIVQEILADHTVLAIPSPDVVLESTGSKKEDIEIEECVAKPDCISEETLAALNDRFSTKGDPVLVKVDDLSKEDRKSIHHFIRERYAGVLITETKEDGILVSHGHTKSSRKRKLWDEKVPKECHFTICKENKETSFACQLIAKFLNVGPNNIRTHGIKDKRAVTSQRVSVTKVHERTILDLNSKLRGIRVFGCEYKDDPVQMGAHWGNRFSIVLRSLPDDSEQLLHQRLETFQNTGFINYFGTQRFGSRSSTTAEIGLAIVKRDWEKAVKMIMTNAMPDHLGYGSVGYAAKCFSQTGDARKAFSKLKGAQAFATVEGNILKCLSKGGTWQNCITEAIPIQSRSLYVHAYQSLIWNKVASRRVKEYGTRVHESDVGANGFSLGEHATHYDIHIPLPGENLPFEGSYGAKWISELLEEDGLTQSSFTALKDRFSLGESSRCLFVEAKELKWKFIRYGNARDLLQDGLQTRAIPEAEQKGPLLALQIQFSLISGSYATVALREVTGSDMGKKAMRDASFKTRGDDEKTEENVLEEKGSDDANELNLVSEDQ.

Catalysis depends on Asp-188, which acts as the Nucleophile. The 208-residue stretch at 265–472 (GFINYFGTQR…GESSRCLFVE (208 aa)) folds into the TRUD domain. The span at 538–565 (KAMRDASFKTRGDDEKTEENVLEEKGSD) shows a compositional bias: basic and acidic residues. The segment at 538-577 (KAMRDASFKTRGDDEKTEENVLEEKGSDDANELNLVSEDQ) is disordered.

This sequence belongs to the pseudouridine synthase TruD family.

It carries out the reaction a uridine in tRNA = a pseudouridine in tRNA. The protein is Putative pseudouridine synthase B0024.11 of Caenorhabditis elegans.